We begin with the raw amino-acid sequence, 394 residues long: Maltose permease (394 aa).

Residues Met-1–Ala-11 are Cytoplasmic-facing. Residues Arg-12–Leu-38 form a helical membrane-spanning segment. Residues Gln-39 to Ser-45 lie on the Extracellular side of the membrane. A helical transmembrane segment spans residues Gly-46–Thr-74. The Cytoplasmic segment spans residues Arg-75–Val-78. The helical transmembrane segment at Gly-79 to Phe-104 threads the bilayer. Residues Val-105 to Thr-108 are Extracellular-facing. Residues Val-109–Ala-126 traverse the membrane as a helical segment. Topologically, residues Leu-127–Tyr-137 are cytoplasmic. The helical transmembrane segment at Gly-138–Asp-160 threads the bilayer. Residues His-161 to Ala-163 lie on the Extracellular side of the membrane. A helical membrane pass occupies residues Phe-164–Thr-183. At Arg-184–Leu-213 the chain is on the cytoplasmic side. The chain crosses the membrane as a helical span at residues Leu-214–Leu-233. The Extracellular portion of the chain corresponds to Leu-234–Glu-237. The helical transmembrane segment at Leu-238–Ala-262 threads the bilayer. The Cytoplasmic segment spans residues Ala-263 to Met-272. Residues Val-273–Ala-292 traverse the membrane as a helical segment. The Extracellular segment spans residues Asp-293–Pro-295. Residues Leu-296–Leu-318 form a helical membrane-spanning segment. The Cytoplasmic segment spans residues Gln-319–Gln-330. Residues Ser-331 to Glu-358 traverse the membrane as a helical segment. Over Arg-359–Gln-361 the chain is Extracellular. Residues Ile-362–Leu-382 form a helical membrane-spanning segment. Residues Leu-383–Lys-394 are Cytoplasmic-facing.

It belongs to the major facilitator superfamily.

The protein resides in the cell membrane. Its function is as follows. High affinity transport of maltose. In Geobacillus stearothermophilus (Bacillus stearothermophilus), this protein is Maltose permease (malA).